Reading from the N-terminus, the 244-residue chain is Glutathione S-transferase theta-2 (244 aa).

In terms of domain architecture, GST N-terminal spans Gly-2–Asp-82. Glutathione contacts are provided by residues His-40–Lys-41, Lys-53–Leu-54, Glu-66–Ser-67, and Asp-104–Arg-107. One can recognise a GST C-terminal domain in the interval Asp-88 to Thr-224.

The protein belongs to the GST superfamily. Theta family. Homodimer. As to expression, expressed at low levels in liver. In lung, expressed at low levels in ciliated bronchiolar cells, alveolar macrophages and alveolar type II cells.

Its subcellular location is the cytoplasm. The protein localises to the cytosol. It localises to the nucleus. The enzyme catalyses RX + glutathione = an S-substituted glutathione + a halide anion + H(+). In terms of biological role, conjugation of reduced glutathione to a wide number of exogenous and endogenous hydrophobic electrophiles. Has a sulfatase activity. The chain is Glutathione S-transferase theta-2 (GSTT2) from Homo sapiens (Human).